The primary structure comprises 86 residues: UPF0512 protein V (86 aa).

Belongs to the UPF0512 family.

The sequence is that of UPF0512 protein V from Dictyostelium discoideum (Social amoeba).